A 321-amino-acid chain; its full sequence is Olfactory receptor 52N2 (321 aa).

Topologically, residues 1 to 27 are extracellular; that stretch reads MSGDNSSSLTPGFFILNGVPGLEATHI. An N-linked (GlcNAc...) asparagine glycan is attached at Asn5. A helical transmembrane segment spans residues 28–48; the sequence is WISLPFCFMYIIAVVGNCGLI. The Cytoplasmic segment spans residues 49–56; sequence CLISHEEA. The helical transmembrane segment at 57–77 threads the bilayer; that stretch reads LHRPMYYFLALLSFTDVTLCT. At 78 to 101 the chain is on the extracellular side; sequence TMVPNMLCIFWFNLKEIDFNACLA. Cys99 and Cys191 are joined by a disulfide. Residues 102 to 122 traverse the membrane as a helical segment; sequence QMFFVHMLTGMESGVLMLMAL. The Cytoplasmic portion of the chain corresponds to 123 to 141; that stretch reads DRYVAICYPLRYATILTNP. A helical membrane pass occupies residues 142–162; that stretch reads VIAKAGLATFLRNVMLIIPFT. The Extracellular portion of the chain corresponds to 163–198; the sequence is LLTKRLPYCRGNFIPHTYCDHMSVAKVSCGNFKVNA. The chain crosses the membrane as a helical span at residues 199 to 219; it reads IYGLMVALLIGVFDICCISVS. Residues 220 to 239 lie on the Cytoplasmic side of the membrane; it reads YTMILQAVMSLSSADARHKA. Residues 240 to 260 form a helical membrane-spanning segment; sequence FSTCTSHMCSIVITYVAAFFT. Residues 261-276 lie on the Extracellular side of the membrane; the sequence is FFTHRFVGHNIPNHIH. A helical membrane pass occupies residues 277-297; the sequence is IIVANLYLLLPPTMNPIVYGV. Topologically, residues 298–321 are cytoplasmic; that stretch reads KTKQIQEGVIKFLLGDKVSFTYDK.

Belongs to the G-protein coupled receptor 1 family.

It is found in the cell membrane. Odorant receptor. This is Olfactory receptor 52N2 (OR52N2) from Homo sapiens (Human).